Here is an 86-residue protein sequence, read N- to C-terminus: Kunitz-type anticoagulant protein Ir-CPI (86 aa).

A signal peptide spans 1-19 (MPFIFVVSFAILACIVVDT). Positions 31–81 (CKLPPDDGPCRARIPSYYFDRKTKTCKEFMYGGCEGNENNFENITTCQEEC) constitute a BPTI/Kunitz inhibitor domain. 3 cysteine pairs are disulfide-bonded: C31–C81, C40–C64, and C56–C77. N73 carries an N-linked (GlcNAc...) asparagine glycan.

Salivary gland.

The protein resides in the secreted. Anticoagulant protein. Increases fibrinolysis time. Inhibits thrombin generation. Inhibits the generation of the active forms of host coagulation factor XII, factor XI and plasma kallikrein. The chain is Kunitz-type anticoagulant protein Ir-CPI from Ixodes ricinus (Common tick).